The chain runs to 72 residues: Large ribosomal subunit protein bL32c (72 aa).

The interval 49–72 (PPAPVSENWDDEAKGFGKDLDAAE) is disordered. Basic and acidic residues predominate over residues 59 to 72 (DEAKGFGKDLDAAE).

This sequence belongs to the bacterial ribosomal protein bL32 family.

It localises to the plastid. The protein localises to the chloroplast. The polypeptide is Large ribosomal subunit protein bL32c (Ostreococcus tauri).